The chain runs to 259 residues: 14-3-3-like protein GF14 omega (259 aa).

Phosphoserine is present on residues Ser67, Ser109, and Ser190. A Phosphothreonine modification is found at Thr211.

It belongs to the 14-3-3 family. In terms of assembly, interacts with CINV1.

It is found in the nucleus. It localises to the cytoplasm. Functionally, is associated with a DNA binding complex that binds to the G box, a well-characterized cis-acting DNA regulatory element found in plant genes. This chain is 14-3-3-like protein GF14 omega (GRF2), found in Arabidopsis thaliana (Mouse-ear cress).